The following is a 1040-amino-acid chain: Exosome RNA helicase MTR4 (1040 aa).

Position 2 is an N-acetylalanine (Ala2). The tract at residues 16 to 77 is disordered; that stretch reads DSTSAAGAKK…GTDEPIFGKK (62 aa). Over residues 23–33 the composition is skewed to basic and acidic residues; sequence AKKDKEKEKWK. Residue Lys24 forms a Glycyl lysine isopeptide (Lys-Gly) (interchain with G-Cter in SUMO2) linkage. Position 38 is a phosphoserine (Ser38). Residues 41–50 show a composition bias toward basic and acidic residues; it reads KAGKRLDTKL. 2 positions are modified to N6-acetyllysine: Lys49 and Lys76. Residues Ile137, 159-166, Ser162, Gly164, Lys165, and Thr166 contribute to the ATP site; that span reads AHTSAGKT. The Helicase ATP-binding domain occupies 146–302; sequence IQCVDNNQSV…WICHLHKQPC (157 aa). The DEIH box signature appears at 250-253; the sequence is DEIH. Residue Lys356 forms a Glycyl lysine isopeptide (Lys-Gly) (interchain with G-Cter in SUMO2) linkage. Residues 403–575 form the Helicase C-terminal domain; sequence QMTKLDFNTD…NMVLNLLRVE (173 aa). Residues Lys682 and Lys721 each participate in a glycyl lysine isopeptide (Lys-Gly) (interchain with G-Cter in SUMO2) cross-link.

Belongs to the helicase family. SKI2 subfamily. Component of a TRAMP-like complex, an ATP-dependent exosome regulatory complex consisting of a helicase (MTREX), an oligadenylate polymerase (TENT4B or TENT4A), and a substrate specific RNA-binding factor (ZCCHC7 or ZCCHC8). Several TRAMP-like complexes exist with specific compositions and are associated with nuclear, or nucleolar RNA exosomes. Identified in the spliceosome C complex. Component of the poly(A) tail exosome targeting (PAXT) complex made of PABPN1, ZFC3H1 and MTREX that directs a subset of long and polyadenylated poly(A) RNAs for exosomal degradation. Component of the nuclear exosome targeting (NEXT) complex composed of MTREX, ZCCHC8, and RBM7 that directs a subset of non-coding short-lived RNAs for exosomal degradation. Interacts with ZCCHC8; this interaction bridges the interaction between RBM7 and MTREX. Binds to ZFC3H1 and RBM7 in a RNase-insensitive manner. Interacts with EXOSC10; the interaction mediates the association of MTREX with nuclear RNA exosomes. Interacts with isoform 1 of NVL in an ATP-dependent manner; the interaction is required to associate NVL with nuclear RNA exosome. Interacts with WDR74; the interaction dissociation in a late stage of rRNA synthesis is required for appropriate maturation of pre-60S particles and depends on the ATPase activity of NVL. Interacts with MPHOSPH6. Interacts with the RNA cap-binding complex proteins NCBP1 and SRRT. Interacts with NRDE2; the interaction is direct and negatively regulates MTREX function in exosomal degradation by changing its conformation precluding interaction with ZFC3H1, the RNA cap-binding complex proteins NCBP1 and SRRT, and association with the exosome. Associates with the RNA exosome complex.

The protein localises to the nucleus. The protein resides in the nucleoplasm. It localises to the nucleolus. It is found in the nucleus speckle. The catalysed reaction is ATP + H2O = ADP + phosphate + H(+). Its activity is regulated as follows. Activated when MTREX is incorporated into NEXT complex an the nuclear RNA exosome complex. Functionally, catalyzes the ATP-dependent unwinding of RNA duplexes with a single-stranded 3' RNA extension. Central subunit of many protein complexes, namely TRAMP-like, nuclear exosome targeting (NEXT) and poly(A) tail exosome targeting (PAXT). NEXT functions as an RNA exosome cofactor that directs a subset of non-coding short-lived RNAs for exosomal degradation. NEXT is involved in surveillance and turnover of aberrant transcripts and non-coding RNAs. PAXT directs a subset of long and polyadenylated poly(A) RNAs for exosomal degradation. The RNA exosome is fundamental for the degradation of RNA in eukaryotic nuclei. Substrate targeting is facilitated by its cofactor ZCCHC8, which links to RNA-binding protein adapters. Associated with the RNA exosome complex and involved in the 3'-processing of the 7S pre-RNA to the mature 5.8S rRNA. May be involved in pre-mRNA splicing. In the context of NEXT complex can also in vitro unwind DNA:RNA heteroduplexes with a 3' poly (A) RNA tracking strand. Can promote unwinding and degradation of structured RNA substrates when associated with the nuclear exosome and its cofactors. Can displace a DNA strand while translocating on RNA to ultimately degrade the RNA within a DNA/RNA heteroduplex. Plays a role in DNA damage response. This is Exosome RNA helicase MTR4 from Mus musculus (Mouse).